Here is a 437-residue protein sequence, read N- to C-terminus: Inactive peptidyl-prolyl cis-trans isomerase shutdown (437 aa).

The PPIase FKBP-type domain occupies 92 to 178 (DSEVTIHYAA…RPEPALFVIV (87 aa)). 3 TPR repeats span residues 209 to 242 (VNAL…LRLS), 258 to 294 (VNAY…EKHC), and 295 to 327 (KALY…EPKN).

Belongs to the FKBP6 family. In terms of assembly, interacts with Hsp83.

It localises to the cytoplasm. In terms of biological role, co-chaperone required during oogenesis to repress transposable elements and prevent their mobilization, which is essential for the germline integrity. Acts via the piRNA metabolic process, which mediates the repression of transposable elements during meiosis by forming complexes composed of piRNAs and Piwi proteins and govern the methylation and subsequent repression of transposons. Acts as a co-chaperone via its interaction with Hsp83/HSP90 and is required for the biogenesis of all three piRNA major populations. In Bombyx mori (Silk moth), this protein is Inactive peptidyl-prolyl cis-trans isomerase shutdown (shu).